A 314-amino-acid chain; its full sequence is GATA zinc finger domain-containing protein 19 (314 aa).

The protein is GATA zinc finger domain-containing protein 19 (gtaS) of Dictyostelium discoideum (Social amoeba).